Here is a 410-residue protein sequence, read N- to C-terminus: Angiopoietin-related protein 4 (410 aa).

The first 23 residues, 1-23 (MRCAPTAGAALMLCAATAGLLSA), serve as a signal peptide directing secretion. The interval 81-106 (KDPEGSAAPPRAQANLVNPGGGDASP) is disordered. Residues 107–155 (ETLRSLKTQLEAQNSRIQQLFQKVAQQQRHLEKQQLRIQNLQSQMDHLA) are a coiled coil. Asn-184 carries N-linked (GlcNAc...) asparagine glycosylation. The region spanning 186 to 408 (SRLHRLPRDC…ATTILVQPTA (223 aa)) is the Fibrinogen C-terminal domain. Cystine bridges form between Cys-195/Cys-223 and Cys-348/Cys-361.

In terms of assembly, homooligomer; disulfide-linked via Cys residues in the N-terminal part of the protein. The homooligomer undergoes proteolytic processing to release the ANGPTL4 C-terminal chain, which circulates as a monomer. The homooligomer unprocessed form is able to interact with the extracellular matrix. N-glycosylated. In terms of processing, forms disulfide-linked dimers and tetramers. Post-translationally, cleaved into a smaller N-terminal chain and a larger chain that contains the fibrinogen C-terminal domain; both cleaved and uncleaved forms are detected in the extracellular space. The cleaved form is not present within the cell.

The protein resides in the secreted. The protein localises to the extracellular space. Its subcellular location is the extracellular matrix. Functionally, mediates inactivation of the lipoprotein lipase LPL, and thereby plays a role in the regulation of triglyceride clearance from the blood serum and in lipid metabolism. May also play a role in regulating glucose homeostasis and insulin sensitivity. Inhibits proliferation, migration, and tubule formation of endothelial cells and reduces vascular leakage. Upon heterologous expression, inhibits the adhesion of endothelial cell to the extracellular matrix (ECM), and inhibits the reorganization of the actin cytoskeleton, formation of actin stress fibers and focal adhesions in endothelial cells that have adhered to ANGPTL4-containing ECM (in vitro). Depending on context, may modulate tumor-related angiogenesis. In terms of biological role, mediates inactivation of the lipoprotein lipase LPL, and thereby plays an important role in the regulation of triglyceride clearance from the blood serum and in lipid metabolism. Has higher activity in LPL inactivation than the uncleaved protein. This chain is Angiopoietin-related protein 4 (ANGPTL4), found in Bos taurus (Bovine).